A 380-amino-acid polypeptide reads, in one-letter code: Succinate--CoA ligase [ADP-forming] subunit beta (380 aa).

Residues Arg-9–Arg-237 form the ATP-grasp domain. ATP-binding positions include Lys-45, Gly-52–Gly-54, Val-94, and Glu-99. Mg(2+)-binding residues include Asn-192 and Asp-206. Substrate contacts are provided by residues Asn-257 and Gly-314–Thr-316.

This sequence belongs to the succinate/malate CoA ligase beta subunit family. In terms of assembly, heterotetramer of two alpha and two beta subunits. It depends on Mg(2+) as a cofactor.

The catalysed reaction is succinate + ATP + CoA = succinyl-CoA + ADP + phosphate. It catalyses the reaction GTP + succinate + CoA = succinyl-CoA + GDP + phosphate. Its pathway is carbohydrate metabolism; tricarboxylic acid cycle; succinate from succinyl-CoA (ligase route): step 1/1. Functionally, succinyl-CoA synthetase functions in the citric acid cycle (TCA), coupling the hydrolysis of succinyl-CoA to the synthesis of either ATP or GTP and thus represents the only step of substrate-level phosphorylation in the TCA. The beta subunit provides nucleotide specificity of the enzyme and binds the substrate succinate, while the binding sites for coenzyme A and phosphate are found in the alpha subunit. This chain is Succinate--CoA ligase [ADP-forming] subunit beta, found in Chloroflexus aurantiacus (strain ATCC 29366 / DSM 635 / J-10-fl).